Consider the following 681-residue polypeptide: uncharacterized protein (681 aa).

The protein belongs to the protein kinase superfamily. ADCK protein kinase family.

This is an uncharacterized protein from Synechocystis sp. (strain ATCC 27184 / PCC 6803 / Kazusa).